The following is a 202-amino-acid chain: Nuclear transcription factor Y subunit C-6 (202 aa).

A compositionally biased stretch (low complexity) spans 1 to 16 (MAENNNNNGDNMNNDN). Disordered stretches follow at residues 1–29 (MAEN…LPPM) and 180–202 (AWPA…GGGN). The segment covering 17 to 29 (HQQPPSYSQLPPM) has biased composition (polar residues).

Belongs to the NFYC/HAP5 subunit family. In terms of assembly, heterotrimeric transcription factor composed of three components, NF-YA, NF-YB and NF-YC. NF-YB and NF-YC must interact and dimerize for NF-YA association and DNA binding. Expressed in flowers and siliques.

It is found in the nucleus. Functionally, stimulates the transcription of various genes by recognizing and binding to a CCAAT motif in promoters. This chain is Nuclear transcription factor Y subunit C-6 (NFYC6), found in Arabidopsis thaliana (Mouse-ear cress).